A 968-amino-acid polypeptide reads, in one-letter code: AP2-associated protein kinase 1 (968 aa).

N-acetylmethionine is present on Met-1. The segment covering 1–11 (MKKFFDSRREQ) has biased composition (basic and acidic residues). Residues 1–25 (MKKFFDSRREQGGSGLGSGSSGGGG) are disordered. The span at 12–25 (GGSGLGSGSSGGGG) shows a compositional bias: gly residues. Ser-14 bears the Phosphoserine mark. The Protein kinase domain occupies 46 to 315 (VTVDEVLAEG…QVSFFSFKLL (270 aa)). ATP is bound by residues 52–60 (LAEGGFAIV) and Lys-74. Catalysis depends on Asp-176, which acts as the Proton acceptor. Tyr-234 carries the phosphotyrosine modification. Residue Ser-235 is modified to Phosphoserine. 2 disordered regions span residues 327–485 (SPIP…AQAP) and 578–640 (IQPP…AGHR). A phosphothreonine mark is found at Thr-354 and Thr-389. Arg-391 carries the post-translational modification Omega-N-methylarginine. Residues 437–448 (QAPPAPQQPPSA) show a composition bias toward pro residues. Low complexity-rich tracts occupy residues 449 to 472 (PAQG…LKQQ) and 578 to 589 (IQPPQAQPATAS). The residue at position 613 (Thr-613) is a Phosphothreonine. Ser-625 is subject to Phosphoserine. Thr-627 carries the post-translational modification Phosphothreonine. Residues Ser-630, Ser-631, Ser-644, and Ser-657 each carry the phosphoserine modification. The residue at position 660 (Thr-660) is a Phosphothreonine. The disordered stretch occupies residues 671-708 (SLNKSKSATTTPSGSPRASQQNVYNPSEGSTWNPFDDD). Positions 679–703 (TTTPSGSPRASQQNVYNPSEGSTWN) are enriched in polar residues. At Tyr-694 the chain carries Phosphotyrosine. Phosphoserine is present on residues Ser-738, Ser-853, Ser-944, and Ser-945. The tract at residues 830–967 (EKADVAVESL…SLLLVDQLID (138 aa)) is clathrin-binding domain (CBD). Disordered stretches follow at residues 843–862 (LEPP…ASNR) and 929–952 (PVLI…ESSL). Positions 851-862 (LPSQTESVASNR) are enriched in polar residues. The segment covering 938 to 951 (GGHSRNSSGSSESS) has biased composition (low complexity).

Belongs to the protein kinase superfamily. Ser/Thr protein kinase family. Interacts (via CBD domain) with clathrin. Interacts with AP-2 complex. Interacts with NUMB. Interacts with alpha-adaptin. Interacts with EPS15. Interacts with membrane-bound activated NOTCH1 but not with the inactive full-length form of NOTCH1. Preferentially interacts with monoubiquitinated activated NOTCH1 compared to the non-ubiquitinated form. In terms of processing, autophosphorylated.

It localises to the cell membrane. The protein localises to the membrane. It is found in the clathrin-coated pit. Its subcellular location is the presynapse. It carries out the reaction L-seryl-[protein] + ATP = O-phospho-L-seryl-[protein] + ADP + H(+). The enzyme catalyses L-threonyl-[protein] + ATP = O-phospho-L-threonyl-[protein] + ADP + H(+). Stimulated by clathrin. Regulates clathrin-mediated endocytosis by phosphorylating the AP2M1/mu2 subunit of the adaptor protein complex 2 (AP-2) which ensures high affinity binding of AP-2 to cargo membrane proteins during the initial stages of endocytosis. Preferentially, may phosphorylate substrates on threonine residues. Regulates phosphorylation of other AP-2 subunits as well as AP-2 localization and AP-2-mediated internalization of ligand complexes. Phosphorylates NUMB and regulates its cellular localization, promoting NUMB localization to endosomes. Binds to and stabilizes the activated form of NOTCH1, increases its localization in endosomes and regulates its transcriptional activity. The protein is AP2-associated protein kinase 1 (AAK1) of Sus scrofa (Pig).